Here is a 248-residue protein sequence, read N- to C-terminus: Small ribosomal subunit protein uS2 (248 aa).

It belongs to the universal ribosomal protein uS2 family.

The chain is Small ribosomal subunit protein uS2 from Dechloromonas aromatica (strain RCB).